Here is a 248-residue protein sequence, read N- to C-terminus: Probable phosphatase VCM66_A0854 (248 aa).

His-8, His-10, His-16, His-41, Glu-74, His-102, His-132, Asp-194, and His-196 together coordinate Zn(2+).

This sequence belongs to the PHP family. Zn(2+) serves as cofactor.

This chain is Probable phosphatase VCM66_A0854, found in Vibrio cholerae serotype O1 (strain M66-2).